The chain runs to 451 residues: Chromosomal replication initiator protein DnaA (451 aa).

The tract at residues 1 to 72 is domain I, interacts with DnaA modulators; sequence MQSIEDIWQE…ANILQEITGR (72 aa). The domain II stretch occupies residues 72–108; it reads RLFDVRFIDGEQEENFEYTVIKPNPALDEDGIEIGKH. Residues 109-325 are domain III, AAA+ region; sequence MLNPRYVFDT…GALIRVVAYS (217 aa). 4 residues coordinate ATP: Gly153, Gly155, Lys156, and Thr157. Residues 326-451 are domain IV, binds dsDNA; that stretch reads SLVNKDITAG…KNLRKSQNMF (126 aa).

This sequence belongs to the DnaA family. As to quaternary structure, oligomerizes as a right-handed, spiral filament on DNA at oriC.

The protein localises to the cytoplasm. Plays an essential role in the initiation and regulation of chromosomal replication. ATP-DnaA binds to the origin of replication (oriC) to initiate formation of the DNA replication initiation complex once per cell cycle. Binds the DnaA box (a 9 base pair repeat at the origin) and separates the double-stranded (ds)DNA. Forms a right-handed helical filament on oriC DNA; dsDNA binds to the exterior of the filament while single-stranded (ss)DNA is stabiized in the filament's interior. The ATP-DnaA-oriC complex binds and stabilizes one strand of the AT-rich DNA unwinding element (DUE), permitting loading of DNA polymerase. After initiation quickly degrades to an ADP-DnaA complex that is not apt for DNA replication. Binds acidic phospholipids. This chain is Chromosomal replication initiator protein DnaA, found in Listeria welshimeri serovar 6b (strain ATCC 35897 / DSM 20650 / CCUG 15529 / CIP 8149 / NCTC 11857 / SLCC 5334 / V8).